Consider the following 341-residue polypeptide: tRNA-specific 2-thiouridylase MnmA (341 aa).

ATP-binding positions include 8–15 (GMSGGVDS) and Met-34. The active-site Nucleophile is the Cys-94. The cysteines at positions 94 and 188 are disulfide-linked. Gly-118 provides a ligand contact to ATP. The segment at 136-138 (KDQ) is interaction with tRNA. The active-site Cysteine persulfide intermediate is the Cys-188. The interaction with tRNA stretch occupies residues 290–291 (RY).

This sequence belongs to the MnmA/TRMU family.

The protein localises to the cytoplasm. It carries out the reaction S-sulfanyl-L-cysteinyl-[protein] + uridine(34) in tRNA + AH2 + ATP = 2-thiouridine(34) in tRNA + L-cysteinyl-[protein] + A + AMP + diphosphate + H(+). Its function is as follows. Catalyzes the 2-thiolation of uridine at the wobble position (U34) of tRNA, leading to the formation of s(2)U34. The polypeptide is tRNA-specific 2-thiouridylase MnmA (Sulfurimonas denitrificans (strain ATCC 33889 / DSM 1251) (Thiomicrospira denitrificans (strain ATCC 33889 / DSM 1251))).